The following is a 260-amino-acid chain: Adenosylcobinamide-GDP ribazoletransferase (260 aa).

A run of 7 helical transmembrane segments spans residues 31–51, 57–77, 108–128, 131–151, 173–193, 206–226, and 240–260; these read FYFL…PIYF, IEIS…SIHL, YGTI…STII, AGLL…VVVF, FFFW…IAAF, LKYL…IRIS, and LIVE…NVHL.

The protein belongs to the CobS family. It depends on Mg(2+) as a cofactor.

The protein localises to the cell inner membrane. It carries out the reaction alpha-ribazole + adenosylcob(III)inamide-GDP = adenosylcob(III)alamin + GMP + H(+). The catalysed reaction is alpha-ribazole 5'-phosphate + adenosylcob(III)inamide-GDP = adenosylcob(III)alamin 5'-phosphate + GMP + H(+). Its pathway is cofactor biosynthesis; adenosylcobalamin biosynthesis; adenosylcobalamin from cob(II)yrinate a,c-diamide: step 7/7. Joins adenosylcobinamide-GDP and alpha-ribazole to generate adenosylcobalamin (Ado-cobalamin). Also synthesizes adenosylcobalamin 5'-phosphate from adenosylcobinamide-GDP and alpha-ribazole 5'-phosphate. This chain is Adenosylcobinamide-GDP ribazoletransferase, found in Treponema denticola (strain ATCC 35405 / DSM 14222 / CIP 103919 / JCM 8153 / KCTC 15104).